The following is a 223-amino-acid chain: UPF0441 protein YgiB (223 aa).

The disordered stretch occupies residues 201–223 (ESVAKQSTMQRSAAGTSTRSMGG). Residues 204–223 (AKQSTMQRSAAGTSTRSMGG) are compositionally biased toward polar residues.

It belongs to the UPF0441 family.

The sequence is that of UPF0441 protein YgiB from Salmonella gallinarum (strain 287/91 / NCTC 13346).